A 421-amino-acid polypeptide reads, in one-letter code: Ameloblastin (421 aa).

The first 26 residues, 1–26 (MPALKIPLFKMKDMVLILCLLKMSSA), serve as a signal peptide directing secretion. Pro-37 carries the post-translational modification Hydroxyproline. Ser-43 carries the phosphoserine modification. 3 disordered regions span residues 104–126 (PVHPPPLPSQPSLQPQQPGQKPF), 264–311 (GGMP…ADPE), and 333–421 (GKIP…FQEP). Ser-112 carries O-linked (GalNAc...) serine glycosylation. The span at 113–125 (QPSLQPQQPGQKP) shows a compositional bias: low complexity. A compositionally biased stretch (low complexity) spans 339–350 (ARGPAGRSRGPP). Residues 388-410 (MDSTATPYSEHTSMPGNKAQQPQ) are compositionally biased toward polar residues. Residues 411–421 (IKRDAWRFQEP) are compositionally biased toward basic and acidic residues.

Belongs to the ameloblastin family. In terms of tissue distribution, ameloblast-specific. Located at the Tomes processes of secretory ameloblasts and in the sheath space between rod-interrod enamel.

Its subcellular location is the secreted. It is found in the extracellular space. The protein localises to the extracellular matrix. Functionally, involved in the mineralization and structural organization of enamel. This chain is Ameloblastin (AMBN), found in Sus scrofa (Pig).